We begin with the raw amino-acid sequence, 695 residues long: MSSSDKIPSLFGDDDALAPVPAAPFKASVEPRVEPTPRPIPPPPPSKTASAPGEYSAADIEVLEGLEPVRKRPGMYIGGTDERALHHLFAEVLDNSMDEAVAGFAKTIEVKLDADGFLSVKDDGRGMPVDPHPKYPGKSALEVIMTVLHAGGKFTGKAYETSGGLHGVGASVVNALSERVEVTVWRDGFEHLQVFSRGKPLGPIQQVAPSKKKGTMVRFKPDDEIFGEGTNFKPARLYRMARSKAYLFRGVQIKWSCDPSRIHDQTPPEATFHFPNGLADFLAERTKGLTTITPESFAGRIERQGEAGAVEWAVTWTPQGFGEHDGFMQSYCNTVPTPEGGTHESGFRAALTRGLKAYAELKGEKRGTIITADDVVAQAGALISVFIKNPEFQGQTKEKLSTSEAQRFVEASLRDPFDLWLSSSPKNAQALLEFVIERAEERLKRRKDKEVSRASATRKLRLPGKLADCAGSAVDGAELFIVEGDSAGGSAKQARDRKYQAILPLRGKILNVASASGEKFTANKELSDLMLALGAQAGAKYREEDLRYERIIIMTDADVDGAHIASLLITFFYRTMPELIRGGHLFLALPPLYRLAHGGKSEYARDDAHKEELLATVFKGKKPEIGRFKGLGEMMASQLKETTMDPKKRTLARVTLPRHEESVEDLVETLMGRKPELRFRFIQENAEFASADLDL.

The disordered stretch occupies residues 1-53 (MSSSDKIPSLFGDDDALAPVPAAPFKASVEPRVEPTPRPIPPPPPSKTASAPG). The segment covering 36-46 (TPRPIPPPPPS) has biased composition (pro residues). ATP contacts are provided by residues Tyr-55, Asn-95, Asp-122, 164 to 170 (GLHGVGA), and Lys-397. Residues 477 to 591 (AELFIVEGDS…GGHLFLALPP (115 aa)) enclose the Toprim domain. Glu-483, Asp-556, and Asp-558 together coordinate Mg(2+).

The protein belongs to the type II topoisomerase family. ParE type 1 subfamily. As to quaternary structure, heterotetramer composed of ParC and ParE. Mg(2+) is required as a cofactor. It depends on Mn(2+) as a cofactor. Ca(2+) serves as cofactor.

The catalysed reaction is ATP-dependent breakage, passage and rejoining of double-stranded DNA.. Topoisomerase IV is essential for chromosome segregation. It relaxes supercoiled DNA. Performs the decatenation events required during the replication of a circular DNA molecule. The sequence is that of DNA topoisomerase 4 subunit B from Caulobacter vibrioides (strain ATCC 19089 / CIP 103742 / CB 15) (Caulobacter crescentus).